A 469-amino-acid polypeptide reads, in one-letter code: MTAPRTLYDKIWDDHVVDVGPDGSALLYIDRHLVHEVTSPQAFEGLRVAGRKVHAPHKTLAVVDHNVQTSDRSKGIEDPESRTQLEALAENVRDFGIEFYDALDRRQGIVHIIGPEQGFTLPGQTIVCGDSHTSTHGAFGALAHGIGTSEVEHVLATQTLIQRKAKNMRVTVDGTLPPGVSAKDIVLAIIGEIGTAGGTGHVIEYAGEAIRALSMEGRMTICNMSIEGGARAGMVAPDEITYAYVKDRPKAPKGAAFDAARRYWESLVSDEGAQFDREIRLDAANLPPLVSWGTSPEDIVSILGTVPDPAQIADENKRQSKEKALAYMGLTPGMRMTDITLDRVFIGSCTNGRIEDLRIVAKMVEGRKVHDGVSAMVVPGSGLVKAQAEAEGIDRILKDAGFDWREPGCSMCLGMNPDKLRPGERCASTSNRNFEGRQGPRGRTHLVSPAMAAAAAVAGRFVDIREWRG.

Positions 349, 409, and 412 each coordinate [4Fe-4S] cluster.

It belongs to the aconitase/IPM isomerase family. LeuC type 1 subfamily. As to quaternary structure, heterodimer of LeuC and LeuD. It depends on [4Fe-4S] cluster as a cofactor.

It carries out the reaction (2R,3S)-3-isopropylmalate = (2S)-2-isopropylmalate. It functions in the pathway amino-acid biosynthesis; L-leucine biosynthesis; L-leucine from 3-methyl-2-oxobutanoate: step 2/4. Functionally, catalyzes the isomerization between 2-isopropylmalate and 3-isopropylmalate, via the formation of 2-isopropylmaleate. The sequence is that of 3-isopropylmalate dehydratase large subunit from Methylorubrum populi (strain ATCC BAA-705 / NCIMB 13946 / BJ001) (Methylobacterium populi).